Here is a 596-residue protein sequence, read N- to C-terminus: Uptake hydrogenase large subunit (596 aa).

Residues cysteine 75, cysteine 78, cysteine 575, and cysteine 578 each contribute to the Ni(2+) site.

It belongs to the [NiFe]/[NiFeSe] hydrogenase large subunit family. In terms of assembly, heterodimer of a large and a small subunit. It depends on Ni(2+) as a cofactor.

The protein resides in the cell membrane. It carries out the reaction H2 + A = AH2. Its function is as follows. This enzyme recycles the H(2) produced by nitrogenase to increase the production of ATP and to protect nitrogenase against inhibition or damage by O(2) under carbon- or phosphate-limited conditions. In Bradyrhizobium diazoefficiens (strain JCM 10833 / BCRC 13528 / IAM 13628 / NBRC 14792 / USDA 110), this protein is Uptake hydrogenase large subunit (hupB).